A 620-amino-acid chain; its full sequence is Glutathione-regulated potassium-efflux system protein KefC (620 aa).

12 consecutive transmembrane segments (helical) span residues 4–24, 26–46, 54–74, 90–110, 114–134, 149–169, 178–198, 218–238, 270–290, 294–314, 327–347, and 359–379; these read HTLLQALIYLGSAALIVPIAV, LGLGSVLGYLIAGCIIGPWGL, SILHFAEIGVVLMLFVIGLEL, GALQMVVCGGLIGLFCMFLGL, VAELIGMTLALSSTAIAMQAM, FAVLLFQDIAAIPLVAMIPLL, LGAFALSALKVAGALALVVVL, VFSAVALFLVFGFGLLLEEVG, GLLLGLFFIGVGMSIDFGTLV, LRILLLLAGFLAIKIVMLWLV, WFAVLLGQGSEFAFVVFGAAQ, and ALTLAVALSMAATPIFLVLLT. In terms of domain architecture, RCK N-terminal spans 399-518; sequence QPRVIVAGFG…AGVAMPERET (120 aa). Residues 599–620 are disordered; sequence QGTAEGKHSGEVADEPEVKPSI.

This sequence belongs to the monovalent cation:proton antiporter 2 (CPA2) transporter (TC 2.A.37) family. KefC subfamily. In terms of assembly, homodimer. Interacts with the regulatory subunit KefF.

It localises to the cell inner membrane. Its function is as follows. Pore-forming subunit of a potassium efflux system that confers protection against electrophiles. Catalyzes K(+)/H(+) antiport. This Salmonella paratyphi B (strain ATCC BAA-1250 / SPB7) protein is Glutathione-regulated potassium-efflux system protein KefC.